A 168-amino-acid chain; its full sequence is Ribosome maturation factor RimP (168 aa).

The protein belongs to the RimP family.

The protein localises to the cytoplasm. Required for maturation of 30S ribosomal subunits. The protein is Ribosome maturation factor RimP of Bordetella parapertussis (strain 12822 / ATCC BAA-587 / NCTC 13253).